The following is a 97-amino-acid chain: Large ribosomal subunit protein uL30m (97 aa).

The protein belongs to the universal ribosomal protein uL30 family. Component of the mitochondrial large ribosomal subunit (mt-LSU). Mature yeast 74S mitochondrial ribosomes consist of a small (37S) and a large (54S) subunit. The 37S small subunit contains a 15S ribosomal RNA (15S mt-rRNA) and at least 32 different proteins. The 54S large subunit contains a 21S rRNA (21S mt-rRNA) and at least 45 different proteins.

The protein resides in the mitochondrion. Component of the mitochondrial ribosome (mitoribosome), a dedicated translation machinery responsible for the synthesis of mitochondrial genome-encoded proteins, including at least some of the essential transmembrane subunits of the mitochondrial respiratory chain. The mitoribosomes are attached to the mitochondrial inner membrane and translation products are cotranslationally integrated into the membrane. In Schizosaccharomyces pombe (strain 972 / ATCC 24843) (Fission yeast), this protein is Large ribosomal subunit protein uL30m (mrpl33).